A 117-amino-acid chain; its full sequence is Gamma-aminobutyric acid receptor-associated protein (117 aa).

Residues 1–22 (MKFVYKEEHPFEKRRSEGEKIR) are interaction with beta-tubulin. The segment at 36–68 (APKARIGDLDKKKYLVPSDLTVGQFYFLIRKRI) is interaction with GABRG2. The interaction with GPHN stretch occupies residues 36 to 117 (APKARIGDLD…AYSDESVYGL (82 aa)). The interval 48-50 (KYL) is interaction with LIR (LC3 nteracting Region) motif of ATG3. Gly116 carries the Phosphatidylethanolamine amidated glycine; alternate lipid modification. Gly116 carries the Phosphatidylserine amidated glycine; alternate lipid modification. Leu117 is a propeptide (removed in mature form).

Belongs to the ATG8 family. As to quaternary structure, interacts with GPHN and NSF. Interacts with ATG3, ATG7 and ATG13. Interacts with alpha-tubulin. Interacts with beta-tubulin. Interacts with GABRG2. Interacts with RB1CC1. Interacts with ULK1. Interacts with CALR. Interacts with DDX47. Interacts with TP53INP1 and TP53INP2. Interacts with TBC1D5. Interacts with TBC1D25. Directly interacts with SQSTM1. Interacts with MAPK15. Interacts with TECPR2. Interacts with PCM1. Interacts with TRIM5 and TRIM21. Interacts with MEFV. Interacts with KIF21B. Interacts with WDFY3; this interaction is required for WDFY3 recruitment to MAP1LC3B-positive p62/SQSTM1 bodies. Interacts with FLCN; interaction regulates autophagy. Interacts with UBA5. Interacts with KBTBD6 and KBTBD7; the interaction is direct and required for the ubiquitination of TIAM1. Interacts with reticulophagy regulators RETREG1, RETREG2 and RETREG3. Interacts with IRGM. Interacts with STX17. Interacts with CT55; this interaction may be important for GABARAP protein stability. Interacts with DNM2. Interacts with NCOA4 (via C-terminus). Post-translationally, the precursor molecule is cleaved by ATG4 (ATG4A, ATG4B, ATG4C or ATG4D) to expose the glycine at the C-terminus and form the cytosolic form, GABARAP-I. The processed form is then activated by APG7L/ATG7, transferred to ATG3 and conjugated to phosphatidylethanolamine (PE) phospholipid to form the membrane-bound form, GABARAP-II. During non-canonical autophagy, the processed form is conjugated to phosphatidylserine (PS) phospholipid. ATG4 proteins also mediate the delipidation of PE-conjugated forms. In addition, ATG4B and ATG4D mediate delipidation of ATG8 proteins conjugated to PS during non-canonical autophagy. ATG4B constitutes the major protein for proteolytic activation. ATG4D is the main enzyme for delipidation activity. As to expression, expressed in brain (at protein level). Can be found in both somatodendritic and axonal compartment of neurons.

Its subcellular location is the cytoplasmic vesicle. The protein localises to the autophagosome membrane. It is found in the endomembrane system. It localises to the cytoplasm. The protein resides in the cytoskeleton. Its subcellular location is the golgi apparatus membrane. Its function is as follows. Ubiquitin-like modifier that plays a role in intracellular transport of GABA(A) receptors and its interaction with the cytoskeleton. Involved in autophagy: while LC3s are involved in elongation of the phagophore membrane, the GABARAP/GATE-16 subfamily is essential for a later stage in autophagosome maturation. Through its interaction with the reticulophagy receptor TEX264, participates in the remodeling of subdomains of the endoplasmic reticulum into autophagosomes upon nutrient stress, which then fuse with lysosomes for endoplasmic reticulum turnover. Also required for the local activation of the CUL3(KBTBD6/7) E3 ubiquitin ligase complex, regulating ubiquitination a nd degradation of TIAM1, a guanyl-nucleotide exchange factor (GEF) that activates RAC1 and downstream signal transduction. Thereby, regulates different biological processes including the organization of the cytoskeleton, cell migration and proliferation. Involved in apoptosis. The polypeptide is Gamma-aminobutyric acid receptor-associated protein (Rattus norvegicus (Rat)).